We begin with the raw amino-acid sequence, 418 residues long: Tyrosine--tRNA ligase (418 aa).

Position 34 (Y34) interacts with L-tyrosine. Positions 39–48 (PTGDSMHIGH) match the 'HIGH' region motif. Residues Y166 and Q170 each coordinate L-tyrosine. The 'KMSKS' region signature appears at 228–232 (KFGKT). K231 lines the ATP pocket. In terms of domain architecture, S4 RNA-binding spans 350 to 418 (QNIVLWLVDA…KKRYFLAHVK (69 aa)).

The protein belongs to the class-I aminoacyl-tRNA synthetase family. TyrS type 1 subfamily. In terms of assembly, homodimer.

The protein localises to the cytoplasm. It catalyses the reaction tRNA(Tyr) + L-tyrosine + ATP = L-tyrosyl-tRNA(Tyr) + AMP + diphosphate + H(+). Catalyzes the attachment of tyrosine to tRNA(Tyr) in a two-step reaction: tyrosine is first activated by ATP to form Tyr-AMP and then transferred to the acceptor end of tRNA(Tyr). The chain is Tyrosine--tRNA ligase from Lactiplantibacillus plantarum (strain ATCC BAA-793 / NCIMB 8826 / WCFS1) (Lactobacillus plantarum).